Consider the following 63-residue polypeptide: Cytochrome c oxidase subunit 7C, mitochondrial (63 aa).

The N-terminal 16 residues, 1–16 (MLGQSIRRFTTSVVRR), are a transit peptide targeting the mitochondrion. Over 17 to 33 (SHYEEGPGKNLPFSVEN) the chain is Mitochondrial matrix. An N6-acetyllysine; alternate modification is found at lysine 25. At lysine 25 the chain carries N6-succinyllysine; alternate. A helical membrane pass occupies residues 34–60 (KWRLLLMMTVYFGSGFAAPFFIVRHQL). The Mitochondrial intermembrane portion of the chain corresponds to 61-63 (LKK).

The protein belongs to the cytochrome c oxidase VIIc family. In terms of assembly, component of the cytochrome c oxidase (complex IV, CIV), a multisubunit enzyme composed of 14 subunits. The complex is composed of a catalytic core of 3 subunits MT-CO1, MT-CO2 and MT-CO3, encoded in the mitochondrial DNA, and 11 supernumerary subunits COX4I, COX5A, COX5B, COX6A, COX6B, COX6C, COX7A, COX7B, COX7C, COX8 and NDUFA4, which are encoded in the nuclear genome. The complex exists as a monomer or a dimer and forms supercomplexes (SCs) in the inner mitochondrial membrane with NADH-ubiquinone oxidoreductase (complex I, CI) and ubiquinol-cytochrome c oxidoreductase (cytochrome b-c1 complex, complex III, CIII), resulting in different assemblies (supercomplex SCI(1)III(2)IV(1) and megacomplex MCI(2)III(2)IV(2)). Interacts with RAB5IF.

The protein localises to the mitochondrion inner membrane. It functions in the pathway energy metabolism; oxidative phosphorylation. Component of the cytochrome c oxidase, the last enzyme in the mitochondrial electron transport chain which drives oxidative phosphorylation. The respiratory chain contains 3 multisubunit complexes succinate dehydrogenase (complex II, CII), ubiquinol-cytochrome c oxidoreductase (cytochrome b-c1 complex, complex III, CIII) and cytochrome c oxidase (complex IV, CIV), that cooperate to transfer electrons derived from NADH and succinate to molecular oxygen, creating an electrochemical gradient over the inner membrane that drives transmembrane transport and the ATP synthase. Cytochrome c oxidase is the component of the respiratory chain that catalyzes the reduction of oxygen to water. Electrons originating from reduced cytochrome c in the intermembrane space (IMS) are transferred via the dinuclear copper A center (CU(A)) of subunit 2 and heme A of subunit 1 to the active site in subunit 1, a binuclear center (BNC) formed by heme A3 and copper B (CU(B)). The BNC reduces molecular oxygen to 2 water molecules using 4 electrons from cytochrome c in the IMS and 4 protons from the mitochondrial matrix. This Rattus norvegicus (Rat) protein is Cytochrome c oxidase subunit 7C, mitochondrial (Cox7c).